Reading from the N-terminus, the 617-residue chain is Dihydroxy-acid dehydratase (617 aa).

Aspartate 81 contacts Mg(2+). Cysteine 122 is a [2Fe-2S] cluster binding site. Aspartate 123 and lysine 124 together coordinate Mg(2+). N6-carboxylysine is present on lysine 124. [2Fe-2S] cluster is bound at residue cysteine 195. Residue glutamate 492 coordinates Mg(2+). Serine 518 serves as the catalytic Proton acceptor.

This sequence belongs to the IlvD/Edd family. As to quaternary structure, homodimer. Requires [2Fe-2S] cluster as cofactor. The cofactor is Mg(2+).

The catalysed reaction is (2R)-2,3-dihydroxy-3-methylbutanoate = 3-methyl-2-oxobutanoate + H2O. It carries out the reaction (2R,3R)-2,3-dihydroxy-3-methylpentanoate = (S)-3-methyl-2-oxopentanoate + H2O. It participates in amino-acid biosynthesis; L-isoleucine biosynthesis; L-isoleucine from 2-oxobutanoate: step 3/4. The protein operates within amino-acid biosynthesis; L-valine biosynthesis; L-valine from pyruvate: step 3/4. Functionally, functions in the biosynthesis of branched-chain amino acids. Catalyzes the dehydration of (2R,3R)-2,3-dihydroxy-3-methylpentanoate (2,3-dihydroxy-3-methylvalerate) into 2-oxo-3-methylpentanoate (2-oxo-3-methylvalerate) and of (2R)-2,3-dihydroxy-3-methylbutanoate (2,3-dihydroxyisovalerate) into 2-oxo-3-methylbutanoate (2-oxoisovalerate), the penultimate precursor to L-isoleucine and L-valine, respectively. The sequence is that of Dihydroxy-acid dehydratase from Azorhizobium caulinodans (strain ATCC 43989 / DSM 5975 / JCM 20966 / LMG 6465 / NBRC 14845 / NCIMB 13405 / ORS 571).